The chain runs to 96 residues: Co-chaperonin GroES (96 aa).

It belongs to the GroES chaperonin family. As to quaternary structure, heptamer of 7 subunits arranged in a ring. Interacts with the chaperonin GroEL.

The protein localises to the cytoplasm. Together with the chaperonin GroEL, plays an essential role in assisting protein folding. The GroEL-GroES system forms a nano-cage that allows encapsulation of the non-native substrate proteins and provides a physical environment optimized to promote and accelerate protein folding. GroES binds to the apical surface of the GroEL ring, thereby capping the opening of the GroEL channel. The protein is Co-chaperonin GroES of Shewanella piezotolerans (strain WP3 / JCM 13877).